The following is a 105-amino-acid chain: Small ribosomal subunit protein uS10 (105 aa).

The protein belongs to the universal ribosomal protein uS10 family. Part of the 30S ribosomal subunit.

In terms of biological role, involved in the binding of tRNA to the ribosomes. This Acidobacterium capsulatum (strain ATCC 51196 / DSM 11244 / BCRC 80197 / JCM 7670 / NBRC 15755 / NCIMB 13165 / 161) protein is Small ribosomal subunit protein uS10.